The following is a 267-amino-acid chain: Myeloid leukemia factor 1 (267 aa).

Residues Ser6, Ser8, Ser32, and Ser34 each carry the phosphoserine modification. A disordered region spans residues 39–67 (RDLLSISDGRGRTHNRRERDDGEDSLTHA). The tract at residues 50–125 (RTHNRRERDD…VGDEPPKVFQ (76 aa)) is interaction with COPS3.

Belongs to the MLF family. As to quaternary structure, interacts with CENPU. Also interacts with NRBP1/MADM, YWHAZ/14-3-3-zeta and HNRPUL2/MANP. NRBP1 recruits a serine kinase which phosphorylates both itself and MLF1. Phosphorylated MLF1 then binds to YWHAZ and is retained in the cytoplasm. Retained in the nucleus by binding to HNRPUL2. Binds to COPS3/CSN3 which is required for suppression of COP1 and activation of p53. In terms of processing, phosphorylation is required for binding to YWHAZ. Highly expressed in skeletal muscle, heart, testis. Also found in lung, but not in spleen, thymus, bone marrow, liver and kidney.

Its subcellular location is the cytoplasm. It is found in the nucleus. The protein localises to the cell projection. It localises to the cilium. The protein resides in the cytoskeleton. Its subcellular location is the cilium basal body. Involved in lineage commitment of primary hemopoietic progenitors by restricting erythroid formation and enhancing myeloid formation. Interferes with erythropoietin-induced erythroid terminal differentiation by preventing cells from exiting the cell cycle through suppression of CDKN1B/p27Kip1 levels. Suppresses COP1 activity via CSN3 which activates p53 and induces cell cycle arrest. Binds DNA and affects the expression of a number of genes so may function as a transcription factor in the nucleus. In Mus musculus (Mouse), this protein is Myeloid leukemia factor 1 (Mlf1).